The chain runs to 224 residues: Cytidylate kinase (224 aa).

11 to 19 contacts ATP; the sequence is GPAAAGKST.

The protein belongs to the cytidylate kinase family. Type 1 subfamily.

It localises to the cytoplasm. It catalyses the reaction CMP + ATP = CDP + ADP. The enzyme catalyses dCMP + ATP = dCDP + ADP. This chain is Cytidylate kinase, found in Listeria welshimeri serovar 6b (strain ATCC 35897 / DSM 20650 / CCUG 15529 / CIP 8149 / NCTC 11857 / SLCC 5334 / V8).